Here is a 788-residue protein sequence, read N- to C-terminus: Cell division cycle protein 27 homolog (788 aa).

Positions 198–436 (YLDSPASSLK…PLPSVASSLN (239 aa)) are disordered. Positions 217-229 (GPSSSSAASTAEP) are enriched in low complexity. Composition is skewed to polar residues over residues 241-273 (RGTI…SRIN), 293-303 (SSVTGSRSSLF), and 319-360 (NRAN…NPVR). A compositionally biased stretch (low complexity) spans 366–378 (ADAAAAANKTAKT). Residues 391-414 (VSRNSNLARSLSGSTNSVASTASE) are compositionally biased toward polar residues. 5 TPR repeats span residues 561–594 (PQSW…DKRF), 596–628 (YAYT…SPRD), 629–662 (YRAW…NPTN), 664–696 (AMLC…NPLD), and 731–764 (AFIF…DPRG).

It belongs to the APC3/CDC27 family. In terms of assembly, the APC/C complex is probably composed of at least 12 subunits: apc-2, apc-10, apc-11, cdc-26, emb-1, emb-27, emb-30, mat-1, mat-2, mat-3, such-1 and gfi-3. In terms of tissue distribution, expressed in the ventral nerve cord.

The protein localises to the nucleus. The protein operates within protein modification; protein ubiquitination. Its function is as follows. Probable component of the anaphase promoting complex/cyclosome (APC/C), a cell cycle-regulated E3 ubiquitin ligase that controls progression through mitosis and the G1 phase of the cell cycle. The APC/C complex acts by mediating ubiquitination and subsequent degradation of target proteins. Developmental role in early embryogenesis and the metaphase to anaphase transition in oocyte and spermatocyte meiosis and mitosis in germ cells. Required for embryonic anterior-posterior axis formation. Plays a role in regulating the abundance of glr-1 receptors in postmitotic neurons, which may in turn control animal locomotion. In Caenorhabditis elegans, this protein is Cell division cycle protein 27 homolog.